We begin with the raw amino-acid sequence, 339 residues long: DNA-directed RNA polymerase subunit alpha (339 aa).

Residues 1 to 233 (MVREEVAGST…DLFLPFLHAE (233 aa)) form an alpha N-terminal domain (alpha-NTD) region. An alpha C-terminal domain (alpha-CTD) region spans residues 264–339 (KKGIPLNCIF…IDLLKNKLSF (76 aa)).

It belongs to the RNA polymerase alpha chain family. In terms of assembly, in plastids the minimal PEP RNA polymerase catalytic core is composed of four subunits: alpha, beta, beta', and beta''. When a (nuclear-encoded) sigma factor is associated with the core the holoenzyme is formed, which can initiate transcription.

The protein localises to the plastid. It is found in the chloroplast. It carries out the reaction RNA(n) + a ribonucleoside 5'-triphosphate = RNA(n+1) + diphosphate. Its function is as follows. DNA-dependent RNA polymerase catalyzes the transcription of DNA into RNA using the four ribonucleoside triphosphates as substrates. The polypeptide is DNA-directed RNA polymerase subunit alpha (Thinopyrum bessarabicum (Wheatgrass)).